A 38-amino-acid polypeptide reads, in one-letter code: uncharacterized protein (38 aa).

This is an uncharacterized protein from Treponema pallidum (strain Nichols).